The sequence spans 56 residues: Cruciferin (56 aa).

Thr45 is subject to Phosphothreonine.

The protein belongs to the 11S seed storage protein (globulins) family. In terms of assembly, hexamer; each subunit is composed of an acidic and a basic chain derived from a single precursor and linked by a disulfide bond.

This is a seed storage protein. The chain is Cruciferin from Sinapis alba (White mustard).